We begin with the raw amino-acid sequence, 291 residues long: 4-hydroxybenzoate octaprenyltransferase (291 aa).

8 helical membrane-spanning segments follow: residues Pro23 to Gly43, Pro47 to Ile67, Leu98 to Leu118, Phe139 to Tyr159, Trp171 to Val191, Ile216 to Leu236, Ala238 to Leu258, and Phe267 to Ala287.

This sequence belongs to the UbiA prenyltransferase family. The cofactor is Mg(2+).

It is found in the cell inner membrane. The enzyme catalyses all-trans-octaprenyl diphosphate + 4-hydroxybenzoate = 4-hydroxy-3-(all-trans-octaprenyl)benzoate + diphosphate. Its pathway is cofactor biosynthesis; ubiquinone biosynthesis. Functionally, catalyzes the prenylation of para-hydroxybenzoate (PHB) with an all-trans polyprenyl group. Mediates the second step in the final reaction sequence of ubiquinone-8 (UQ-8) biosynthesis, which is the condensation of the polyisoprenoid side chain with PHB, generating the first membrane-bound Q intermediate 3-octaprenyl-4-hydroxybenzoate. This Ralstonia nicotianae (strain ATCC BAA-1114 / GMI1000) (Ralstonia solanacearum) protein is 4-hydroxybenzoate octaprenyltransferase.